A 58-amino-acid polypeptide reads, in one-letter code: Light-harvesting protein B-875 alpha chain (58 aa).

Residues 1–15 lie on the Cytoplasmic side of the membrane; the sequence is MSKFYKIWMIFDPRR. The helical transmembrane segment at 16–36 threads the bilayer; the sequence is VFVAQGVFLFLLAVMIHLILL. His32 lines the a bacteriochlorophyll pocket. Residues 37–58 lie on the Periplasmic side of the membrane; it reads STPSYNWLEISAAKYNRVAVAE.

This sequence belongs to the antenna complex alpha subunit family. The core complex is formed by different alpha and beta chains, binding bacteriochlorophyll molecules, and arranged most probably in tetrameric structures disposed around the reaction center. The non-pigmented gamma chains may constitute additional components.

It localises to the cell inner membrane. In terms of biological role, antenna complexes are light-harvesting systems, which transfer the excitation energy to the reaction centers. This Cereibacter sphaeroides (strain ATCC 17023 / DSM 158 / JCM 6121 / CCUG 31486 / LMG 2827 / NBRC 12203 / NCIMB 8253 / ATH 2.4.1.) (Rhodobacter sphaeroides) protein is Light-harvesting protein B-875 alpha chain (pufA).